We begin with the raw amino-acid sequence, 372 residues long: Flagellar P-ring protein (372 aa).

The first 26 residues, 1-26 (MNLSSLPFRLLAAAVALCAIAAPASA), serve as a signal peptide directing secretion.

This sequence belongs to the FlgI family. The basal body constitutes a major portion of the flagellar organelle and consists of four rings (L,P,S, and M) mounted on a central rod.

It is found in the periplasm. It localises to the bacterial flagellum basal body. Functionally, assembles around the rod to form the L-ring and probably protects the motor/basal body from shearing forces during rotation. The polypeptide is Flagellar P-ring protein (Xanthomonas axonopodis pv. citri (strain 306)).